Consider the following 477-residue polypeptide: Glycogen synthase (477 aa).

An ADP-alpha-D-glucose-binding site is contributed by Lys-15.

This sequence belongs to the glycosyltransferase 1 family. Bacterial/plant glycogen synthase subfamily.

The enzyme catalyses [(1-&gt;4)-alpha-D-glucosyl](n) + ADP-alpha-D-glucose = [(1-&gt;4)-alpha-D-glucosyl](n+1) + ADP + H(+). Its pathway is glycan biosynthesis; glycogen biosynthesis. Its function is as follows. Synthesizes alpha-1,4-glucan chains using ADP-glucose. The polypeptide is Glycogen synthase (Streptococcus pneumoniae serotype 19F (strain G54)).